Reading from the N-terminus, the 218-residue chain is Eukaryotic translation initiation factor 4E-1 (218 aa).

The span at 1–11 (MQTEQPPKESQ) shows a compositional bias: basic and acidic residues. 2 disordered regions span residues 1-20 (MQTE…SEPQ) and 198-218 (FSAH…RMSV). The span at 206 to 218 (KSGSTRAKTRMSV) shows a compositional bias: polar residues.

Belongs to the eukaryotic initiation factor 4E family. In terms of assembly, eIF4F is a multi-subunit complex, the composition of which varies with external and internal environmental conditions. It is composed of at least eIF4A, eIF4E and eIF4G. eIF4E is also known to interact with other partners.

In terms of biological role, recognizes and binds the 7-methylguanosine-containing mRNA cap during an early step in the initiation of protein synthesis and facilitates ribosome binding by inducing the unwinding of the mRNAs secondary structures. This is Eukaryotic translation initiation factor 4E-1 (tif451) from Schizosaccharomyces pombe (strain 972 / ATCC 24843) (Fission yeast).